A 711-amino-acid chain; its full sequence is Double-stranded RNA-specific editase 1 (711 aa).

Positions 1–78 (MDIEDEENMS…KRRKTPGPVL (78 aa)) are disordered. Residues 63 to 73 (SKYRLKKRRKT) show a composition bias toward basic residues. One can recognise a DRBM 1 domain in the interval 78-144 (LPKNALMQLN…AEKALRSFVQ (67 aa)). Interaction with substrate RNA regions lie at residues 83-88 (LMQLNE) and 104-105 (VH). Serine 149 carries the phosphoserine modification. Positions 176–220 (LFNGFETPDKSEPPFYVGSNGDDSFSSSGDVSLSASPVPASLTQP) are disordered. A compositionally biased stretch (low complexity) spans 192 to 213 (VGSNGDDSFSSSGDVSLSASPV). Positions 231 to 298 (PSGKNPVMIL…AQSALATVFN (68 aa)) constitute a DRBM 2 domain. Interaction with substrate RNA regions lie at residues 237 to 242 (VMILNE) and histidine 259. Positions 370 to 707 (SVSTGTKCIN…VEKPTEQDQF (338 aa)) constitute an A to I editase domain. Histidine 394 provides a ligand contact to Zn(2+). Glutamate 396 acts as the Proton donor in catalysis. 1D-myo-inositol hexakisphosphate-binding residues include arginine 400 and arginine 401. Positions 451 and 526 each coordinate Zn(2+). 1D-myo-inositol hexakisphosphate is bound by residues lysine 529, arginine 532, lysine 639, lysine 672, lysine 682, and lysine 700.

Homodimer. Homodimerization is essential for its catalytic activity. Can form heterodimers with isoform 5 of ADAR/ADAR1. It depends on 1D-myo-inositol hexakisphosphate as a cofactor.

It is found in the nucleus. Its subcellular location is the nucleolus. It catalyses the reaction adenosine in double-stranded RNA + H2O + H(+) = inosine in double-stranded RNA + NH4(+). Functionally, catalyzes the hydrolytic deamination of adenosine to inosine in double-stranded RNA (dsRNA) referred to as A-to-I RNA editing. This may affect gene expression and function in a number of ways that include mRNA translation by changing codons and hence the amino acid sequence of proteins; pre-mRNA splicing by altering splice site recognition sequences; RNA stability by changing sequences involved in nuclease recognition; genetic stability in the case of RNA virus genomes by changing sequences during viral RNA replication; and RNA structure-dependent activities such as microRNA production or targeting or protein-RNA interactions. Can edit both viral and cellular RNAs and can edit RNAs at multiple sites (hyper-editing) or at specific sites (site-specific editing). Its cellular RNA substrates include: bladder cancer-associated protein (BLCAP), neurotransmitter receptors for glutamate (GRIA2 and GRIK2) and serotonin (HTR2C), GABA receptor (GABRA3) and potassium voltage-gated channel (KCNA1). Site-specific RNA editing of transcripts encoding these proteins results in amino acid substitutions which consequently alter their functional activities. Edits GRIA2 at both the Q/R and R/G sites efficiently but converts the adenosine in hotspot1 much less efficiently. Can inhibit cell proliferation and migration and can stimulate exocytosis. The polypeptide is Double-stranded RNA-specific editase 1 (Adarb1) (Mus musculus (Mouse)).